The following is a 137-amino-acid chain: Large ribosomal subunit protein uL14A (137 aa).

Ser-2 is modified (N-acetylserine). N6,N6-dimethyllysine; by RKM1 occurs at positions 106 and 110.

This sequence belongs to the universal ribosomal protein uL14 family. As to quaternary structure, component of the large ribosomal subunit (LSU). Mature yeast ribosomes consist of a small (40S) and a large (60S) subunit. The 40S small subunit contains 1 molecule of ribosomal RNA (18S rRNA) and 33 different proteins (encoded by 57 genes). The large 60S subunit contains 3 rRNA molecules (25S, 5.8S and 5S rRNA) and 46 different proteins (encoded by 81 genes). Post-translationally, methylated by RKM1 at 2 different sites, but it is unclear which are the 2 methylated residues among Lys-40, Lys-106 and/or Lys-110.

It is found in the cytoplasm. Functionally, component of the ribosome, a large ribonucleoprotein complex responsible for the synthesis of proteins in the cell. The small ribosomal subunit (SSU) binds messenger RNAs (mRNAs) and translates the encoded message by selecting cognate aminoacyl-transfer RNA (tRNA) molecules. The large subunit (LSU) contains the ribosomal catalytic site termed the peptidyl transferase center (PTC), which catalyzes the formation of peptide bonds, thereby polymerizing the amino acids delivered by tRNAs into a polypeptide chain. The nascent polypeptides leave the ribosome through a tunnel in the LSU and interact with protein factors that function in enzymatic processing, targeting, and the membrane insertion of nascent chains at the exit of the ribosomal tunnel. The sequence is that of Large ribosomal subunit protein uL14A from Saccharomyces cerevisiae (strain ATCC 204508 / S288c) (Baker's yeast).